The following is a 42-amino-acid chain: Photosystem I reaction center subunit IX (42 aa).

Residues 7–27 (YLSTAPVLAAIWFAILAGLLI) form a helical membrane-spanning segment.

It belongs to the PsaJ family.

The protein localises to the plastid. Its subcellular location is the chloroplast thylakoid membrane. Functionally, may help in the organization of the PsaE and PsaF subunits. The polypeptide is Photosystem I reaction center subunit IX (Zygnema circumcarinatum (Green alga)).